The following is a 291-amino-acid chain: Asialoglycoprotein receptor 1 (291 aa).

Over residues M1–H19 the composition is skewed to basic and acidic residues. The interval M1–P27 is disordered. At M1 to R40 the chain is on the cytoplasmic side. The short motif at C5 to L8 is the Endocytosis signal element. The residue at position 16 (S16) is a Phosphoserine. C36 carries S-palmitoyl cysteine lipidation. Residues L41 to S61 form a helical; Signal-anchor for type II membrane protein membrane-spanning segment. A coiled-coil region spans residues S61–L123. The Extracellular portion of the chain corresponds to Q62–L291. Residues N79 and N147 are each glycosylated (N-linked (GlcNAc...) asparagine). 3 disulfides stabilise this stretch: C154–C165, C182–C277, and C255–C269. One can recognise a C-type lectin domain in the interval H161–E278. Ca(2+) contacts are provided by V191, E197, D216, Q240, D242, D243, E253, D254, N265, D266, and E278. A Phosphoserine modification is found at S285.

Interacts with LASS2. In terms of processing, phosphorylated on a cytoplasmic Ser residue.

It localises to the membrane. Its function is as follows. Mediates the endocytosis of plasma glycoproteins to which the terminal sialic acid residue on their complex carbohydrate moieties has been removed. The receptor recognizes terminal galactose and N-acetylgalactosamine units. After ligand binding to the receptor, the resulting complex is internalized and transported to a sorting organelle, where receptor and ligand are disassociated. The receptor then returns to the cell membrane surface. The protein is Asialoglycoprotein receptor 1 (ASGR1) of Pongo abelii (Sumatran orangutan).